The following is a 287-amino-acid chain: Glycine--tRNA ligase alpha subunit (287 aa).

The protein belongs to the class-II aminoacyl-tRNA synthetase family. As to quaternary structure, tetramer of two alpha and two beta subunits.

Its subcellular location is the cytoplasm. The enzyme catalyses tRNA(Gly) + glycine + ATP = glycyl-tRNA(Gly) + AMP + diphosphate. In Campylobacter jejuni subsp. jejuni serotype O:23/36 (strain 81-176), this protein is Glycine--tRNA ligase alpha subunit.